Reading from the N-terminus, the 527-residue chain is ATP-dependent RNA helicase DBP3 (527 aa).

Over residues 1-11 the composition is skewed to basic residues; the sequence is MSKDHKDKKRK. A disordered region spans residues 1–89; the sequence is MSKDHKDKKR…TGYSQSPALT (89 aa). Residues 12-24 show a composition bias toward basic and acidic residues; it reads HSDEATEEVEKKT. Positions 25–44 are enriched in basic residues; that stretch reads KVSKKEKKDKKEKKEKKDKK. The segment covering 45–71 has biased composition (basic and acidic residues); it reads EKKDKSEKKDKSEKKEKKEKKESEDVP. The span at 72–89 shows a compositional bias: polar residues; sequence TKSSAVVSTGYSQSPALT. The Q motif signature appears at 119–145; that stretch reads LGFDQIDLDSRIASVISKFPTPTPIQA. In terms of domain architecture, Helicase ATP-binding spans 148-319; it reads WPYLLSGKDV…STFMNSPVKV (172 aa). Position 161–168 (161–168) interacts with ATP; sequence AETGSGKT. The DEAD box motif lies at 266–269; it reads DEAD. The Helicase C-terminal domain occupies 348–497; the sequence is KLLSLLRKYQ…PVPDELLKFG (150 aa).

Belongs to the DEAD box helicase family. DDX5/DBP2 subfamily.

The protein localises to the nucleus. Its subcellular location is the nucleolus. The enzyme catalyses ATP + H2O = ADP + phosphate + H(+). In terms of biological role, ATP-dependent RNA helicase required for 60S ribosomal subunit synthesis. Involved in efficient pre-rRNA processing, predominantly at site A3, which is necessary for the normal formation of 25S and 5.8S rRNAs. In Debaryomyces hansenii (strain ATCC 36239 / CBS 767 / BCRC 21394 / JCM 1990 / NBRC 0083 / IGC 2968) (Yeast), this protein is ATP-dependent RNA helicase DBP3 (DBP3).